Consider the following 701-residue polypeptide: Acetyl-coenzyme A synthetase, cytoplasmic (701 aa).

Residues 1–26 show a composition bias toward basic and acidic residues; sequence MGLPEERRKSGSGSRAREETGAEGRV. Residues 1–37 are disordered; sequence MGLPEERRKSGSGSRAREETGAEGRVRGWSPPPEVRR. Residues 1-107 are interaction with TFEB; it reads MGLPEERRKS…GATTNICYNV (107 aa). At Ser30 the chain carries Phosphoserine. 219–222 lines the CoA pocket; the sequence is RGEK. Phosphoserine is present on residues Ser263, Ser265, and Ser267. Residue Thr363 participates in CoA binding. Lys418 carries the N6-acetyllysine modification. Residues 439–441, 463–468, Asp552, and Arg567 contribute to the ATP site; these read GEP and DTFWQT. 2 residues coordinate CoA: Ser575 and Arg636. The short motif at 656–668 is the Nuclear localization signal element; it reads KTRSGKIMRRVLR. Ser659 carries the post-translational modification Phosphoserine; by AMPK. Position 661 is an N6-acetyllysine (Lys661).

This sequence belongs to the ATP-dependent AMP-binding enzyme family. Monomer. Interacts with TFEB. AMPK-mediated phosphorylated form at Ser-659 interacts with KPNA1; this interaction results in nuclear translocation of ACSS2. Interacts with the 'Thr-172' phosphorylated form of PRKAA2. Interacts with CREBBP. Reversibly acetylated at Lys-661. The acetyl-CoA synthase activity is inhibited by acetylation and activated by deacetylation mediated by the deacetylases SIRT1 and SIRT3. As to expression, expressed in the hippocampus.

It is found in the cytoplasm. Its subcellular location is the cytosol. The protein localises to the nucleus. The catalysed reaction is acetate + ATP + CoA = acetyl-CoA + AMP + diphosphate. It carries out the reaction propanoate + ATP + CoA = propanoyl-CoA + AMP + diphosphate. Its activity is regulated as follows. Inhibited by acetylation at Lys-661 and activated by deacetylation mediated by the deacetylases SIRT1 and SIRT3. Functionally, catalyzes the synthesis of acetyl-CoA from short-chain fatty acids. Acetate is the preferred substrate but can also utilize propionate with a much lower affinity. Nuclear ACSS2 promotes glucose deprivation-induced lysosomal biogenesis and autophagy, tumor cell survival and brain tumorigenesis. Glucose deprivation results in AMPK-mediated phosphorylation of ACSS2 leading to its translocation to the nucleus where it binds to TFEB and locally produces acetyl-CoA for histone acetylation in the promoter regions of TFEB target genes thereby activating their transcription. The regulation of genes associated with autophagy and lysosomal activity through ACSS2 is important for brain tumorigenesis and tumor survival. Acts as a chromatin-bound transcriptional coactivator that up-regulates histone acetylation and expression of neuronal genes. Can be recruited to the loci of memory-related neuronal genes to maintain a local acetyl-CoA pool, providing the substrate for histone acetylation and promoting the expression of specific genes, which is essential for maintaining long-term spatial memory. The chain is Acetyl-coenzyme A synthetase, cytoplasmic (Acss2) from Mus musculus (Mouse).